The following is a 607-amino-acid chain: Hemagglutinin glycoprotein (607 aa).

Residues 1-37 (MLSYQDKVGAFYKDNARANSSRLSLVTEDQGGRRPPY) lie on the Intravirion side of the membrane. A helical transmembrane segment spans residues 38-58 (LLFVLLILLVGIMALLAITGV). Residues 59–607 (RFHQVSTSNM…IRFSCNRSKP (549 aa)) are Virion surface-facing. Residues N149, N309, N391, N422, N456, N587, and N603 are each glycosylated (N-linked (GlcNAc...) asparagine; by host).

Belongs to the paramyxoviruses hemagglutinin-neuraminidase family. Non-sialidase subfamily. In terms of assembly, binds canine SLAMF1 at the cell surface.

The protein localises to the virion membrane. Its subcellular location is the host cell membrane. Functionally, attaches the virus to cell receptors and thereby initiating infection. Binding of H protein to the receptor induces a conformational change that allows the F protein to trigger virion/cell membranes fusion. The cellular receptor might be SLAM, and may explain the lymphotropism of the virus. This is Hemagglutinin glycoprotein (H) from Canine distemper virus (strain A92-27/4) (CDV).